A 365-amino-acid polypeptide reads, in one-letter code: Aminomethyltransferase (365 aa).

It belongs to the GcvT family. In terms of assembly, the glycine cleavage system is composed of four proteins: P, T, L and H.

The catalysed reaction is N(6)-[(R)-S(8)-aminomethyldihydrolipoyl]-L-lysyl-[protein] + (6S)-5,6,7,8-tetrahydrofolate = N(6)-[(R)-dihydrolipoyl]-L-lysyl-[protein] + (6R)-5,10-methylene-5,6,7,8-tetrahydrofolate + NH4(+). In terms of biological role, the glycine cleavage system catalyzes the degradation of glycine. This chain is Aminomethyltransferase, found in Desulfitobacterium hafniense (strain Y51).